The sequence spans 365 residues: Probable dual-specificity RNA methyltransferase RlmN (365 aa).

Glu111 (proton acceptor) is an active-site residue. Positions 117–351 (ADDRMTACIS…VNIRRSRGKD (235 aa)) constitute a Radical SAM core domain. Cys124 and Cys356 are disulfide-bonded. Positions 131, 135, and 138 each coordinate [4Fe-4S] cluster. Residues 182-183 (GE), Ser214, 237-239 (SLH), and Asn313 contribute to the S-adenosyl-L-methionine site. Catalysis depends on Cys356, which acts as the S-methylcysteine intermediate.

Belongs to the radical SAM superfamily. RlmN family. [4Fe-4S] cluster is required as a cofactor.

It localises to the cytoplasm. It carries out the reaction adenosine(2503) in 23S rRNA + 2 reduced [2Fe-2S]-[ferredoxin] + 2 S-adenosyl-L-methionine = 2-methyladenosine(2503) in 23S rRNA + 5'-deoxyadenosine + L-methionine + 2 oxidized [2Fe-2S]-[ferredoxin] + S-adenosyl-L-homocysteine. The catalysed reaction is adenosine(37) in tRNA + 2 reduced [2Fe-2S]-[ferredoxin] + 2 S-adenosyl-L-methionine = 2-methyladenosine(37) in tRNA + 5'-deoxyadenosine + L-methionine + 2 oxidized [2Fe-2S]-[ferredoxin] + S-adenosyl-L-homocysteine. Functionally, specifically methylates position 2 of adenine 2503 in 23S rRNA and position 2 of adenine 37 in tRNAs. In Cytophaga hutchinsonii (strain ATCC 33406 / DSM 1761 / CIP 103989 / NBRC 15051 / NCIMB 9469 / D465), this protein is Probable dual-specificity RNA methyltransferase RlmN.